We begin with the raw amino-acid sequence, 638 residues long: Pentatricopeptide repeat-containing protein At1g59720, chloroplastic/mitochondrial (638 aa).

The N-terminal 40 residues, 1–40 (MVVRSIIVSPPTTITYYHPMSIGLLVHPLSPHIPPASSPS), are a transit peptide targeting the chloroplast and mitochondrion. 10 PPR repeats span residues 82–112 (TLFL…IENH), 113–148 (SSFM…GESS), 150–184 (DKHT…GFGG), 185–215 (DVYV…MPER), 216–246 (SLVS…MQRS), 250–280 (DGYT…LLRK), 288–318 (DVLV…MQKR), 319–353 (DLAS…RENV), 356–390 (NSVT…YCIE), and 392–422 (ALEH…MPMK). Positions 427–510 (IWRSLLDACC…EPGCSSIEIN (84 aa)) are type E motif. The type E(+) motif stretch occupies residues 511 to 541 (GISHEFFAGDTSHPQTKQIYQQLKVIDDRLR). A type DYW motif region spans residues 542–638 (SIGYLPDRSQ…DGSCSCLDYW (97 aa)).

The protein belongs to the PPR family. PCMP-H subfamily. As to quaternary structure, interacts with ORRM1. Interacts with VAR3/OZ1.

Its subcellular location is the plastid. It is found in the chloroplast. The protein resides in the mitochondrion. Functionally, involved in multiple sites RNA editing events in chloroplasts. Involved in the editing of the site 2 of ndhB (ndhB-2) and site 3 of ndhD (ndhD-3) transcripts, which are two plastid-encoded subunits of the chloroplast NAD(P)H dehydrogenase (NDH) complex. Required for the activity of the NDH complex of the photosynthetic electron transport chain. This Arabidopsis thaliana (Mouse-ear cress) protein is Pentatricopeptide repeat-containing protein At1g59720, chloroplastic/mitochondrial (PCMP-H51).